Here is a 286-residue protein sequence, read N- to C-terminus: MPIKVENVSFIYNEGTPYATVALKDINFSIDDEEFVGIIGHTGSGKSTLIQQLNGLLKPSKGKIYINGIDITDKKVSLKDIRKQVGLVFQYPEYQLFEETVFKDIAFGPSNLGLSEEEVKERVYEAMEIVGISKELADKSPFELSGGQKRRVAIAGILAMRPKILILDEPTAGLDPKGKQEILNKIKEIHDKYKMITILVSHNMEDIARIADKIIVMNRGKIELIGTPREVFREAERLEKIGLSVPQITSLARELRKRGVPIPPDVLTIEEAKEHILRYLRGTKNV.

The region spanning 3-244 is the ABC transporter domain; the sequence is IKVENVSFIY…AERLEKIGLS (242 aa). 40 to 47 contributes to the ATP binding site; that stretch reads GHTGSGKS.

This sequence belongs to the ABC transporter superfamily. Energy-coupling factor EcfA family. In terms of assembly, forms a stable energy-coupling factor (ECF) transporter complex composed of 2 membrane-embedded substrate-binding proteins (S component), 2 ATP-binding proteins (A component) and 2 transmembrane proteins (T component).

It localises to the cell membrane. ATP-binding (A) component of a common energy-coupling factor (ECF) ABC-transporter complex. Unlike classic ABC transporters this ECF transporter provides the energy necessary to transport a number of different substrates. The polypeptide is Energy-coupling factor transporter ATP-binding protein EcfA2 (Caldanaerobacter subterraneus subsp. tengcongensis (strain DSM 15242 / JCM 11007 / NBRC 100824 / MB4) (Thermoanaerobacter tengcongensis)).